Consider the following 496-residue polypeptide: O-acetyltransferase cpsE (496 aa).

The segment covering 203 to 217 (IGTQGQLPDGVQSSD) has biased composition (polar residues). The tract at residues 203–228 (IGTQGQLPDGVQSSDDPTDGAGDIFE) is disordered.

Belongs to the fumigaclavine B O-acetyltransferase family.

It carries out the reaction campesine A + acetyl-CoA = campesine C + CoA. It participates in alkaloid biosynthesis. O-acetyltransferase; part of the gene cluster that mediates the biosynthesis of campesine G, a dimeric indole piperazine alkaloid that shows good insecticidal activity Galleria mellonella. Within the pathway, cpsE acetylates N13 of campesine A to produce campesine C. CpsE produces an inseparable mixture of two acyl-atropisomers due to the spontaneous rotation of an acyl group at N13 of piperazine ring. The non-canonical non-ribosomal peptide synthetase cpsA catalyzes the first steps of the pathway by producing L-tryptophanal and L-valinal from their respective amino-acids. These products condensate spontaneously to form trypyl-valyl pyrazine also known as didehydrocampesine A. The NmrA-like family domain-containing oxidoreductase cpsB is the next enzyme in cps pathway and reduces the unstable didehydrocampesine A to campesine A. The methyltransferase cpsF and the acetyltransferase cpsE both recognize N13 of piperazine ring to carry out methylation and acetylation of campesine A to produce campesine C and B, respectively. The cytochrome P450 monooxygenase cpsD then acts as a dimerase that catalyzes oxidative heterocoupling between campesine B and C to produce heterodimers with unexpected 6/5/6/6/6/6/5/6 eight-ring scaffold called campesine D. Finally,the cytochrome P450 monooxygenase cpsC is a regioselective dehydrogenase that catalyzes dehydrogenation reaction towards C2-N1 to produce campesine G. This is O-acetyltransferase cpsE from Aspergillus campestris (strain IBT 28561).